A 95-amino-acid polypeptide reads, in one-letter code: Integration host factor subunit beta (95 aa).

It belongs to the bacterial histone-like protein family. Heterodimer of an alpha and a beta chain.

Its function is as follows. This protein is one of the two subunits of integration host factor, a specific DNA-binding protein that functions in genetic recombination as well as in transcriptional and translational control. The chain is Integration host factor subunit beta from Jannaschia sp. (strain CCS1).